The primary structure comprises 300 residues: Nicotinate-nucleotide pyrophosphorylase [carboxylating] (300 aa).

Residues 5–9 (QLLPK) form an important for hexamer formation region. Quinolinate-binding positions include arginine 107, 150–151 (RK), 172–173 (HR), lysine 183, glutamate 213, aspartate 234, 260–262 (SGG), and glycine 282.

This sequence belongs to the NadC/ModD family. As to quaternary structure, hexamer formed by 3 homodimers.

It carries out the reaction nicotinate beta-D-ribonucleotide + CO2 + diphosphate = quinolinate + 5-phospho-alpha-D-ribose 1-diphosphate + 2 H(+). The protein operates within cofactor biosynthesis; NAD(+) biosynthesis; nicotinate D-ribonucleotide from quinolinate: step 1/1. In terms of biological role, involved in the catabolism of quinolinic acid (QA). In Dictyostelium discoideum (Social amoeba), this protein is Nicotinate-nucleotide pyrophosphorylase [carboxylating] (qprt).